A 1078-amino-acid chain; its full sequence is Carbamoyl phosphate synthase large chain (1078 aa).

The tract at residues 1-401 (MARQPLVSSV…ALQKAVRGLE (401 aa)) is carboxyphosphate synthetic domain. Residues Arg129, Arg169, Gly175, Gly176, Arg208, Leu210, Glu215, Gly241, Val242, His243, Gln284, and Glu298 each contribute to the ATP site. The ATP-grasp 1 domain maps to 133-327 (KELLLEIGEP…IARIAAKLAI (195 aa)). Residues Gln284, Glu298, and Asn300 each contribute to the Mg(2+) site. The Mn(2+) site is built by Gln284, Glu298, and Asn300. The tract at residues 402–546 (TDQTDLTWED…YATYEDENEA (145 aa)) is oligomerization domain. Positions 547–935 (PPLDSPKAVV…ALAKAFLAAG (389 aa)) are carbamoyl phosphate synthetic domain. In terms of domain architecture, ATP-grasp 2 spans 677-867 (ERFLHELGIP…MVDVATQILL (191 aa)). 10 residues coordinate ATP: Arg713, Lys752, Leu754, Glu758, Gly783, Val784, His785, Ser786, Gln826, and Glu838. Mg(2+) is bound by residues Gln826, Glu838, and Asn840. Positions 826, 838, and 840 each coordinate Mn(2+). One can recognise an MGS-like domain in the interval 936–1078 (LAIERGAPVL…AYRTREAVLA (143 aa)). The segment at 936 to 1078 (LAIERGAPVL…AYRTREAVLA (143 aa)) is allosteric domain.

Belongs to the CarB family. Composed of two chains; the small (or glutamine) chain promotes the hydrolysis of glutamine to ammonia, which is used by the large (or ammonia) chain to synthesize carbamoyl phosphate. Tetramer of heterodimers (alpha,beta)4. Mg(2+) is required as a cofactor. It depends on Mn(2+) as a cofactor.

The enzyme catalyses hydrogencarbonate + L-glutamine + 2 ATP + H2O = carbamoyl phosphate + L-glutamate + 2 ADP + phosphate + 2 H(+). It carries out the reaction hydrogencarbonate + NH4(+) + 2 ATP = carbamoyl phosphate + 2 ADP + phosphate + 2 H(+). The protein operates within amino-acid biosynthesis; L-arginine biosynthesis; carbamoyl phosphate from bicarbonate: step 1/1. Its pathway is pyrimidine metabolism; UMP biosynthesis via de novo pathway; (S)-dihydroorotate from bicarbonate: step 1/3. Its function is as follows. Large subunit of the glutamine-dependent carbamoyl phosphate synthetase (CPSase). CPSase catalyzes the formation of carbamoyl phosphate from the ammonia moiety of glutamine, carbonate, and phosphate donated by ATP, constituting the first step of 2 biosynthetic pathways, one leading to arginine and/or urea and the other to pyrimidine nucleotides. The large subunit (synthetase) binds the substrates ammonia (free or transferred from glutamine from the small subunit), hydrogencarbonate and ATP and carries out an ATP-coupled ligase reaction, activating hydrogencarbonate by forming carboxy phosphate which reacts with ammonia to form carbamoyl phosphate. The sequence is that of Carbamoyl phosphate synthase large chain from Thermomicrobium roseum (strain ATCC 27502 / DSM 5159 / P-2).